A 208-amino-acid chain; its full sequence is AN1-type zinc finger protein 6 (208 aa).

The A20-type zinc-finger motif lies at 8 to 42; the sequence is SQVPMLCSTGCGFYGNPRTNGMCSVCYKEHLQRQN. Residues C14, C18, C30, and C33 each contribute to the Zn(2+) site. The span at 41–68 shows a compositional bias: polar residues; sequence QNSSNGRISPPATSVSSLSESLPVQCTD. Residues 41 to 140 are disordered; it reads QNSSNGRISP…PSEEQSKSLE (100 aa). S49 bears the Phosphoserine mark. The span at 75–94 shows a compositional bias: low complexity; sequence QSTLDSTSSSMQPSPVSNQS. Polar residues-rich tracts occupy residues 95–110 and 120–133; these read LLSESVASSQLDSTSV and LQASVSDTAQQPSE. Residues 143–189 form an AN1-type zinc finger; that stretch reads KQKKNRCFMCRKKVGLTGFECRCGNVYCGVHRYSDVHNCSYNYKADA. The Zn(2+) site is built by C149, C152, C163, C165, C170, H173, H179, and C181. The residue at position 204 (K204) is an N6-acetyllysine.

Interacts with PKN1. Interacts with TRAF2. Interacts with mono- and polyubiquitin. Interacts with PEX6. Interacts with PEX5 (Cys-linked ubiquitinated).

It localises to the cytoplasm. In terms of biological role, involved in regulation of TNF-alpha induced NF-kappa-B activation and apoptosis. Involved in modulation of 'Lys-48'-linked polyubiquitination status of TRAF2 and decreases association of TRAF2 with RIPK1. Required for PTS1 target sequence-dependent protein import into peroxisomes and PEX5 stability; may cooperate with PEX6. In vitro involved in PEX5 export from the cytosol to peroxisomes. This is AN1-type zinc finger protein 6 (ZFAND6) from Pongo abelii (Sumatran orangutan).